The following is a 415-amino-acid chain: UDP-N-acetylglucosamine 1-carboxyvinyltransferase (415 aa).

22-23 (KN) contributes to the phosphoenolpyruvate binding site. Arginine 92 contacts UDP-N-acetyl-alpha-D-glucosamine. Cysteine 116 functions as the Proton donor in the catalytic mechanism. Cysteine 116 carries the 2-(S-cysteinyl)pyruvic acid O-phosphothioketal modification. Residues 121-125 (RPIDL), aspartate 304, and valine 326 each bind UDP-N-acetyl-alpha-D-glucosamine.

The protein belongs to the EPSP synthase family. MurA subfamily.

It is found in the cytoplasm. The enzyme catalyses phosphoenolpyruvate + UDP-N-acetyl-alpha-D-glucosamine = UDP-N-acetyl-3-O-(1-carboxyvinyl)-alpha-D-glucosamine + phosphate. The protein operates within cell wall biogenesis; peptidoglycan biosynthesis. Cell wall formation. Adds enolpyruvyl to UDP-N-acetylglucosamine. In Halothermothrix orenii (strain H 168 / OCM 544 / DSM 9562), this protein is UDP-N-acetylglucosamine 1-carboxyvinyltransferase.